Reading from the N-terminus, the 235-residue chain is 2-C-methyl-D-erythritol 4-phosphate cytidylyltransferase (235 aa).

It belongs to the IspD/TarI cytidylyltransferase family. IspD subfamily.

It carries out the reaction 2-C-methyl-D-erythritol 4-phosphate + CTP + H(+) = 4-CDP-2-C-methyl-D-erythritol + diphosphate. It functions in the pathway isoprenoid biosynthesis; isopentenyl diphosphate biosynthesis via DXP pathway; isopentenyl diphosphate from 1-deoxy-D-xylulose 5-phosphate: step 2/6. Catalyzes the formation of 4-diphosphocytidyl-2-C-methyl-D-erythritol from CTP and 2-C-methyl-D-erythritol 4-phosphate (MEP). The polypeptide is 2-C-methyl-D-erythritol 4-phosphate cytidylyltransferase (Pseudomonas putida (strain GB-1)).